A 434-amino-acid polypeptide reads, in one-letter code: Calcium uptake protein 2, mitochondrial (434 aa).

Residues 1 to 22 constitute a mitochondrion transit peptide; that stretch reads MAAAAGSCARVAAWGGKLRRGL. In terms of domain architecture, EF-hand 1 spans 172–207; it reads KPHSGFHVAFKMLDTDGNEMIEKREFFKLQKIISKQ. 6 residues coordinate Ca(2+): D185, D187, N189, M191, E193, and E196. S205 is subject to Phosphoserine. An EF-hand 2; degenerate domain is found at 227–262; it reads EPEINTTLQMRFFGKRGQRKLHYKEFRRFMENLQTE. The 36-residue stretch at 293–328 folds into the EF-hand 3; degenerate domain; the sequence is TENKDIYWKNVREKLSAGESISLDEFKSFCHFTTHL. An EF-hand 4 domain is found at 362 to 397; that stretch reads LSNNILDTVFKIFDLDGDECLSHEEFLGVLKNRMHR. The Ca(2+) site is built by D375, D377, D379, C381, and E386.

It belongs to the MICU1 family. MICU2 subfamily. Heterodimer; disulfide-linked; heterodimerizes with MICU1. Component of the uniplex complex, composed of MCU, EMRE/SMDT1, MICU1 and MICU2 in a 4:4:1:1 stoichiometry.

It is found in the mitochondrion intermembrane space. Its subcellular location is the mitochondrion inner membrane. In terms of biological role, calcium sensor of the mitochondrial calcium uniporter (MCU) channel, which senses calcium level via its EF-hand domains. MICU1 and MICU2 form a disulfide-linked heterodimer that stimulates and inhibits MCU activity, depending on the concentration of calcium. At low calcium levels, MICU1 occludes the pore of the MCU channel, preventing mitochondrial calcium uptake. At higher calcium levels, calcium-binding to MICU1 and MICU2 induces a conformational change that weakens MCU-MICU1 interactions and moves the MICU1-MICU2 heterodimer away from the pore, allowing calcium permeation through the MCU channel. This Homo sapiens (Human) protein is Calcium uptake protein 2, mitochondrial.